The primary structure comprises 1226 residues: Methionine synthase (1226 aa).

Residues Lys-7–Val-327 form the Hcy-binding domain. Zn(2+)-binding residues include Cys-249, Cys-312, and Cys-313. The region spanning Phe-358–Glu-619 is the Pterin-binding domain. In terms of domain architecture, B12-binding N-terminal spans Ser-652–Ala-746. Methylcob(III)alamin contacts are provided by residues Glu-696, Gly-758–Asp-762, His-761, Ser-806, Thr-810, and Ala-862. The 136-residue stretch at Asn-748–Glu-883 folds into the B12-binding domain. In terms of domain architecture, AdoMet activation spans Lys-899–Asn-1226. Residues Asp-949, Arg-1137, and Tyr-1192–Phe-1193 contribute to the S-adenosyl-L-methionine site.

The protein belongs to the vitamin-B12 dependent methionine synthase family. It depends on methylcob(III)alamin as a cofactor. Zn(2+) serves as cofactor.

It carries out the reaction (6S)-5-methyl-5,6,7,8-tetrahydrofolate + L-homocysteine = (6S)-5,6,7,8-tetrahydrofolate + L-methionine. The protein operates within amino-acid biosynthesis; L-methionine biosynthesis via de novo pathway; L-methionine from L-homocysteine (MetH route): step 1/1. Catalyzes the transfer of a methyl group from methyl-cobalamin to homocysteine, yielding enzyme-bound cob(I)alamin and methionine. Subsequently, remethylates the cofactor using methyltetrahydrofolate. This Aliivibrio fischeri (Vibrio fischeri) protein is Methionine synthase (metH).